The sequence spans 313 residues: Porphobilinogen deaminase (313 aa).

Position 241 is an S-(dipyrrolylmethanemethyl)cysteine (C241).

Belongs to the HMBS family. In terms of assembly, monomer. Requires dipyrromethane as cofactor.

The enzyme catalyses 4 porphobilinogen + H2O = hydroxymethylbilane + 4 NH4(+). It participates in porphyrin-containing compound metabolism; protoporphyrin-IX biosynthesis; coproporphyrinogen-III from 5-aminolevulinate: step 2/4. The protein operates within porphyrin-containing compound metabolism; chlorophyll biosynthesis. In terms of biological role, tetrapolymerization of the monopyrrole PBG into the hydroxymethylbilane pre-uroporphyrinogen in several discrete steps. This is Porphobilinogen deaminase from Chlorobium phaeovibrioides (strain DSM 265 / 1930) (Prosthecochloris vibrioformis (strain DSM 265)).